The sequence spans 83 residues: Small ribosomal subunit protein bS16 (83 aa).

The protein belongs to the bacterial ribosomal protein bS16 family.

The chain is Small ribosomal subunit protein bS16 from Acinetobacter baumannii (strain AB307-0294).